The sequence spans 152 residues: SsrA-binding protein (152 aa).

Belongs to the SmpB family.

Its subcellular location is the cytoplasm. Functionally, required for rescue of stalled ribosomes mediated by trans-translation. Binds to transfer-messenger RNA (tmRNA), required for stable association of tmRNA with ribosomes. tmRNA and SmpB together mimic tRNA shape, replacing the anticodon stem-loop with SmpB. tmRNA is encoded by the ssrA gene; the 2 termini fold to resemble tRNA(Ala) and it encodes a 'tag peptide', a short internal open reading frame. During trans-translation Ala-aminoacylated tmRNA acts like a tRNA, entering the A-site of stalled ribosomes, displacing the stalled mRNA. The ribosome then switches to translate the ORF on the tmRNA; the nascent peptide is terminated with the 'tag peptide' encoded by the tmRNA and targeted for degradation. The ribosome is freed to recommence translation, which seems to be the essential function of trans-translation. The chain is SsrA-binding protein from Lactobacillus helveticus (strain DPC 4571).